Consider the following 958-residue polypeptide: Glycine dehydrogenase (decarboxylating) (958 aa).

The residue at position 708 (Lys708) is an N6-(pyridoxal phosphate)lysine.

This sequence belongs to the GcvP family. As to quaternary structure, the glycine cleavage system is composed of four proteins: P, T, L and H. Pyridoxal 5'-phosphate is required as a cofactor.

It carries out the reaction N(6)-[(R)-lipoyl]-L-lysyl-[glycine-cleavage complex H protein] + glycine + H(+) = N(6)-[(R)-S(8)-aminomethyldihydrolipoyl]-L-lysyl-[glycine-cleavage complex H protein] + CO2. Its function is as follows. The glycine cleavage system catalyzes the degradation of glycine. The P protein binds the alpha-amino group of glycine through its pyridoxal phosphate cofactor; CO(2) is released and the remaining methylamine moiety is then transferred to the lipoamide cofactor of the H protein. The protein is Glycine dehydrogenase (decarboxylating) of Proteus mirabilis (strain HI4320).